The chain runs to 91 residues: Potassium channel toxin MeuTXK-beta-1 (91 aa).

An N-terminal signal peptide occupies residues 1 to 19 (MQRNLVVLLFLGMVALSSC). In terms of domain architecture, BetaSPN-type CS-alpha/beta spans 54 to 91 (QFGCPAYQGYCDDHCQDIEKKEGFCHGFKCKCGIPMGF). 3 cysteine pairs are disulfide-bonded: Cys-57–Cys-78, Cys-64–Cys-83, and Cys-68–Cys-85.

Expressed by the venom gland.

It is found in the secreted. Its function is as follows. Has a low affinity binding to potassium channels of rat brain synaptosomes. Displays weak antibacterial activity against Stenotrophomonas sp. Strongly inhibits the development of the Plasmodium berghei ookinetes. Displays slight hemolytic effect on mouse erythrocytes. Induces cytolysis on Xenopus oocytes at high concentrations. Is not toxic towards mice and towards the insect Tenebrio molitor. In Mesobuthus eupeus (Lesser Asian scorpion), this protein is Potassium channel toxin MeuTXK-beta-1.